Consider the following 550-residue polypeptide: Envelope glycoprotein E (550 aa).

An N-terminal signal peptide occupies residues 1 to 20 (MDRGAVVGFLLGVCVVSCLA). Residues 21–419 (GTPKTSWRRV…HAPPTHGALR (399 aa)) are Virion surface-facing. Residues 63 to 88 (CGPLHPSWVSLMPPKQVPETVVDAAC) are interaction with gI. Residue asparagine 124 is glycosylated (N-linked (GlcNAc...) asparagine; by host). A disordered region spans residues 162–214 (QPAPVPTPPPTPADYDEDDNDEGEDESLAGTPASGTPRLPPPPAPPRSWPSAP). Positions 164 to 173 (APVPTPPPTP) are enriched in pro residues. Residues 175–188 (DYDEDDNDEGEDES) show a composition bias toward acidic residues. Tyrosine 176 bears the Sulfotyrosine; by host mark. The segment covering 199–209 (RLPPPPAPPRS) has biased composition (pro residues). Residues 235 to 380 (SPGETFSTNV…GHITISTAAQ (146 aa)) form a fc-binding region. N-linked (GlcNAc...) asparagine; by host glycosylation is present at asparagine 243. Intrachain disulfides connect cysteine 271–cysteine 297, cysteine 280–cysteine 289, and cysteine 314–cysteine 323. Residues 394–413 (GADLAEPTHPHVGAPPHAPP) are disordered. The span at 403–413 (PHVGAPPHAPP) shows a compositional bias: low complexity. A helical transmembrane segment spans residues 420–440 (LGAVMGAALLLSALGLSVWAC). Over 441–550 (MTCWRRRAWR…SQASDSSVFW (110 aa)) the chain is Intravirion. 2 consecutive short sequence motifs (internalization motif) follow at residues 463-466 (YIRV) and 472-475 (YADW). Positions 470 to 495 (ELYADWSSDSEGERDQVPWLAPPERP) are interaction with VP22 and UL11. 2 positions are modified to phosphoserine; by host CK2: serine 476 and serine 477. The acidic stretch occupies residues 476–484 (SSDSEGERD). A disordered region spans residues 476-550 (SSDSEGERDQ…SQASDSSVFW (75 aa)). Residue serine 503 is modified to Phosphoserine. The segment covering 541–550 (SQASDSSVFW) has biased composition (polar residues).

It belongs to the alphaherpesvirinae glycoprotein E family. As to quaternary structure, interacts with gI; this interaction enhances the Fc receptor function of gE. The heterodimer gE/gI interacts with the Fc part of host IgG. Interacts (via C-terminus) with VP22 tegument protein; this interaction is necessary for the recruitment of VP22 to the Golgi and its packaging into virions. Interacts (via C-terminus) with UL11 tegument protein. Post-translationally, phosphorylated on serines within the acidic cluster. Phosphorylation determines whether endocytosed viral gE traffics to the trans-Golgi network or recycles to the cell membrane. In terms of processing, N-glycosylated, and sulfated.

The protein resides in the virion membrane. The protein localises to the host cell membrane. Its subcellular location is the host cell junction. It is found in the host Golgi apparatus membrane. It localises to the host endosome membrane. In terms of biological role, in epithelial cells, the heterodimer gE/gI is required for the cell-to-cell spread of the virus, by sorting nascent virions to cell junctions. Once the virus reaches the cell junctions, virus particles can spread to adjacent cells extremely rapidly through interactions with cellular receptors that accumulate at these junctions. Implicated in basolateral spread in polarized cells. In neuronal cells, gE/gI is essential for the anterograde spread of the infection throughout the host nervous system. Together with US9, the heterodimer gE/gI is involved in the sorting and transport of viral structural components toward axon tips. The heterodimer gE/gI serves as a receptor for the Fc part of host IgG. Dissociation of gE/gI from IgG occurs at acidic pH. May thus be involved in anti-HSV antibodies bipolar bridging, followed by intracellular endocytosis and degradation, thereby interfering with host IgG-mediated immune responses. The chain is Envelope glycoprotein E (gE) from Human herpesvirus 1 (strain 17) (HHV-1).